Here is a 200-residue protein sequence, read N- to C-terminus: MTAPVKLAIVFYSSTGTGYAMAQEAAEAGRAAGAEVRLLKVRETAPQDVIDGQDAWKANIEAMKDVPEATPADLEWAEAIVFSSPTRFGGATSQMRAFIDTLGGLWSSGKLANKTFSAMTSAQNVNGGQETTLQTLYMTAMHWGAVLTPPGYTDEVIFKSGGNPYGASVTANGQPLLENDRASIRHQVRRQVELTAKLLG.

The Flavodoxin-like domain maps to 7–199 (LAIVFYSSTG…RQVELTAKLL (193 aa)). Residues 13-18 (SSTGTG), 86-88 (TRF), 121-127 (SAQNVNG), and H142 contribute to the FMN site.

This sequence belongs to the WrbA family. In terms of assembly, homotetramer. FMN is required as a cofactor.

The enzyme catalyses a quinone + NADH + H(+) = a quinol + NAD(+). The catalysed reaction is a quinone + NADPH + H(+) = a quinol + NADP(+). This chain is NAD(P)H dehydrogenase (quinone), found in Deinococcus radiodurans (strain ATCC 13939 / DSM 20539 / JCM 16871 / CCUG 27074 / LMG 4051 / NBRC 15346 / NCIMB 9279 / VKM B-1422 / R1).